The sequence spans 69 residues: Putative membrane protein insertion efficiency factor (69 aa).

It belongs to the UPF0161 family.

Its subcellular location is the cell membrane. In terms of biological role, could be involved in insertion of integral membrane proteins into the membrane. This is Putative membrane protein insertion efficiency factor from Clostridium botulinum (strain Kyoto / Type A2).